Here is a 209-residue protein sequence, read N- to C-terminus: Interleukin-6 (209 aa).

Positions 1-26 (RFTSAFSPVAFSLGLLLVMATAFPTP) are cleaved as a signal peptide. The segment at 28 to 47 (PVGGESQADATSNRPPLTSP) is disordered. Cysteines 69 and 75 form a disulfide. Residue S78 is modified to Phosphoserine. An intrachain disulfide couples C98 to C108.

This sequence belongs to the IL-6 superfamily. Component of a hexamer of two molecules each of IL6, IL6R and IL6ST; first binds to IL6R to associate with the signaling subunit IL6ST. Interacts with IL6R (via the N-terminal ectodomain); this interaction may be affected by IL6R-binding with SORL1, hence decreasing IL6 cis signaling. Interacts with SORL1 (via the N-terminal ectodomain); this interaction leads to IL6 internalization and lysosomal degradation. May form a trimeric complex with the soluble SORL1 ectodomain and soluble IL6R receptor; this interaction might stabilize circulating IL6, hence promoting IL6 trans signaling.

Its subcellular location is the secreted. Its function is as follows. Cytokine with a wide variety of biological functions in immunity, tissue regeneration, and metabolism. Binds to IL6R, then the complex associates to the signaling subunit IL6ST/gp130 to trigger the intracellular IL6-signaling pathway. The interaction with the membrane-bound IL6R and IL6ST stimulates 'classic signaling', whereas the binding of IL6 and soluble IL6R to IL6ST stimulates 'trans-signaling'. Alternatively, 'cluster signaling' occurs when membrane-bound IL6:IL6R complexes on transmitter cells activate IL6ST receptors on neighboring receiver cells. In terms of biological role, IL6 is a potent inducer of the acute phase response. Rapid production of IL6 contributes to host defense during infection and tissue injury, but excessive IL6 synthesis is involved in disease pathology. In the innate immune response, is synthesized by myeloid cells, such as macrophages and dendritic cells, upon recognition of pathogens through toll-like receptors (TLRs) at the site of infection or tissue injury. In the adaptive immune response, is required for the differentiation of B cells into immunoglobulin-secreting cells. Plays a major role in the differentiation of CD4(+) T cell subsets. Essential factor for the development of T follicular helper (Tfh) cells that are required for the induction of germinal-center formation. Required to drive naive CD4(+) T cells to the Th17 lineage. Also required for proliferation of myeloma cells and the survival of plasmablast cells. Functionally, acts as an essential factor in bone homeostasis and on vessels directly or indirectly by induction of VEGF, resulting in increased angiogenesis activity and vascular permeability. Induces, through 'trans-signaling' and synergistically with IL1B and TNF, the production of VEGF. Involved in metabolic controls, is discharged into the bloodstream after muscle contraction increasing lipolysis and improving insulin resistance. 'Trans-signaling' in central nervous system also regulates energy and glucose homeostasis. Mediates, through GLP-1, crosstalk between insulin-sensitive tissues, intestinal L cells and pancreatic islets to adapt to changes in insulin demand. Also acts as a myokine. Plays a protective role during liver injury, being required for maintenance of tissue regeneration. Also has a pivotal role in iron metabolism by regulating HAMP/hepcidin expression upon inflammation or bacterial infection. Through activation of IL6ST-YAP-NOTCH pathway, induces inflammation-induced epithelial regeneration. This Phoca vitulina (Harbor seal) protein is Interleukin-6 (IL6).